The chain runs to 480 residues: Coronin-2B (480 aa).

5 WD repeats span residues 85–125 (GHQG…LKRN), 135–177 (GHSR…KMID), 179–217 (HTDV…VLQE), 220–263 (CKNH…MPMI), and 265–308 (EEID…PYLS). Residues 436–479 (NELLRMFFRQQDEIRRLKEELAQKDIRLRQLQLELKNLRNNPKN) adopt a coiled-coil conformation.

The protein belongs to the WD repeat coronin family. As to quaternary structure, binds to F-actin and to vinculin.

The protein localises to the cytoplasm. It is found in the cytoskeleton. May play a role in the reorganization of neuronal actin structure. The chain is Coronin-2B (Coro2b) from Mus musculus (Mouse).